The primary structure comprises 160 residues: Transcriptional repressor NrdR (160 aa).

The segment at 3–34 (CPSCQNTDSRVLESRAADGGRSVRRRRECLNC) is a zinc-finger region. The ATP-cone domain occupies 49-139 (ITVIKRNGNR…VYRQFRGIDD (91 aa)).

This sequence belongs to the NrdR family. It depends on Zn(2+) as a cofactor.

Functionally, negatively regulates transcription of bacterial ribonucleotide reductase nrd genes and operons by binding to NrdR-boxes. This is Transcriptional repressor NrdR from Synechococcus sp. (strain CC9605).